Consider the following 232-residue polypeptide: Sugar fermentation stimulation protein homolog (232 aa).

The protein belongs to the SfsA family.

The polypeptide is Sugar fermentation stimulation protein homolog (Moorella thermoacetica (strain ATCC 39073 / JCM 9320)).